Reading from the N-terminus, the 140-residue chain is Nuclear receptor 2C2-associated protein (140 aa).

The protein belongs to the NR2C2AP family. As to quaternary structure, interacts with NR2C2/TR4.

It is found in the nucleus. In terms of biological role, may act as a repressor of NR2C2-mediated transactivation by suppressing the binding between NR2C2/TR4 and the TR4-response element in target genes. In Mus musculus (Mouse), this protein is Nuclear receptor 2C2-associated protein (Nr2c2ap).